The chain runs to 705 residues: Polyribonucleotide nucleotidyltransferase (705 aa).

Mg(2+) is bound by residues Asp485 and Asp491. One can recognise a KH domain in the interval 552 to 611 (PRVYTMTIAPEKIRDVIGAGGKTINKIIGETGVQIDIKEDGKIYVMSSDSVGANRALKMI). Residues 621–689 (GEIYLGKVTR…DQGRINLSRR (69 aa)) enclose the S1 motif domain.

The protein belongs to the polyribonucleotide nucleotidyltransferase family. The cofactor is Mg(2+).

Its subcellular location is the cytoplasm. It catalyses the reaction RNA(n+1) + phosphate = RNA(n) + a ribonucleoside 5'-diphosphate. Involved in mRNA degradation. Catalyzes the phosphorolysis of single-stranded polyribonucleotides processively in the 3'- to 5'-direction. The chain is Polyribonucleotide nucleotidyltransferase from Clostridium tetani (strain Massachusetts / E88).